The chain runs to 276 residues: Undecaprenyl-diphosphatase (276 aa).

8 helical membrane-spanning segments follow: residues 6 to 26 (IEIL…WLPI), 49 to 69 (EMFF…MFWN), 89 to 109 (FSLW…GILF), 117 to 137 (LHTP…FIVI), 151 to 171 (LADI…LSLI), 181 to 201 (IIGA…TFFL), 224 to 244 (AELL…VFVI), and 256 to 276 (FKVF…ITAI).

Belongs to the UppP family.

Its subcellular location is the cell membrane. It catalyses the reaction di-trans,octa-cis-undecaprenyl diphosphate + H2O = di-trans,octa-cis-undecaprenyl phosphate + phosphate + H(+). Functionally, catalyzes the dephosphorylation of undecaprenyl diphosphate (UPP). Confers resistance to bacitracin. The sequence is that of Undecaprenyl-diphosphatase from Enterococcus faecalis (Streptococcus faecalis).